A 1613-amino-acid polypeptide reads, in one-letter code: Reverse gyrase (1613 aa).

An RG N-terminal-type zinc finger spans residues 1 to 38 (MIPMIYKEMCPNCNGEITSERLAIGVCEKCLKEENVFE). Cys10, Cys13, Cys27, and Cys30 together coordinate Zn(2+). ATP is bound by residues Gln83 and 100–107 (VPTGVGKS). Residues 87-291 (AKRVLKNKSF…LYRELLDFEI (205 aa)) enclose the Helicase ATP-binding domain. The DEAD box motif lies at 203-206 (DDVD). A Helicase C-terminal domain is found at 310 to 525 (SKEKILEYIK…IDEVNLEELI (216 aa)). A topoisomerase I region spans residues 546–1613 (DLLKSVLMVV…ALHEEILSIR (1068 aa)). The region spanning 550–712 (SVLMVVESPN…NIYRVGFNEI (163 aa)) is the Toprim domain. Residues Glu556 and Asp681 each contribute to the Mg(2+) site. Residues 733–1613 (DENKVKGQVV…ALHEEILSIR (881 aa)) form the Topo IA-type catalytic domain. The 130-residue stretch at 1070–1199 (FAGLVLGDGS…IGIYLNSIGI (130 aa)) folds into the DOD-type homing endonuclease domain. Tyr1363 (O-(5'-phospho-DNA)-tyrosine intermediate) is an active-site residue.

This sequence in the N-terminal section; belongs to the DEAD box helicase family. DDVD subfamily. In the C-terminal section; belongs to the type IA topoisomerase family. As to quaternary structure, monomer. Zn(2+) serves as cofactor. Requires Mg(2+) as cofactor. Post-translationally, this protein undergoes a protein self splicing that involves a post-translational excision of the intervening region (intein) followed by peptide ligation.

The protein localises to the cytoplasm. The enzyme catalyses ATP + H2O = ADP + phosphate + H(+). Functionally, modifies the topological state of DNA by introducing positive supercoils in an ATP-dependent process, increasing the linking number in steps of +1. Binds to single-stranded DNA, transiently cleaves and then rejoins the ends, introducing a positive supercoil in the process. The scissile phosphodiester is attacked by the catalytic tyrosine of the enzyme, resulting in the formation of a DNA-(5'-phosphotyrosyl)-enzyme intermediate. Probably involved in rewinding DNA strands in regions of the chromosome that have opened up to allow replication, transcription, DNA repair and/or for DNA protection. The chain is Reverse gyrase from Methanocaldococcus jannaschii (strain ATCC 43067 / DSM 2661 / JAL-1 / JCM 10045 / NBRC 100440) (Methanococcus jannaschii).